Reading from the N-terminus, the 490-residue chain is Betaine aldehyde dehydrogenase (490 aa).

Residues Ile27 and Asp93 each contribute to the K(+) site. Gly150–Trp152 serves as a coordination point for NAD(+). The active-site Charge relay system is Lys162. Residue Lys176–Glu179 coordinates NAD(+). Val180 serves as a coordination point for K(+). An NAD(+)-binding site is contributed by Gly230–Thr233. Leu246 serves as a coordination point for K(+). Glu252 acts as the Proton acceptor in catalysis. Gly254, Cys286, and Glu387 together coordinate NAD(+). Cys286 serves as the catalytic Nucleophile. Cys286 bears the Cysteine sulfenic acid (-SOH) mark. Residues Lys457 and Gly460 each coordinate K(+). Glu464 acts as the Charge relay system in catalysis.

This sequence belongs to the aldehyde dehydrogenase family. In terms of assembly, dimer of dimers. Requires K(+) as cofactor.

It carries out the reaction betaine aldehyde + NAD(+) + H2O = glycine betaine + NADH + 2 H(+). The protein operates within amine and polyamine biosynthesis; betaine biosynthesis via choline pathway; betaine from betaine aldehyde: step 1/1. Functionally, involved in the biosynthesis of the osmoprotectant glycine betaine. Catalyzes the irreversible oxidation of betaine aldehyde to the corresponding acid. This Pseudomonas putida (strain ATCC 700007 / DSM 6899 / JCM 31910 / BCRC 17059 / LMG 24140 / F1) protein is Betaine aldehyde dehydrogenase.